The primary structure comprises 558 residues: Membrane protein insertase YidC (558 aa).

The next 5 membrane-spanning stretches (helical) occupy residues Ile3–Trp23, Phe364–Phe384, Leu438–Val458, Pro477–Pro497, and Met508–Leu528.

Belongs to the OXA1/ALB3/YidC family. Type 1 subfamily. As to quaternary structure, interacts with the Sec translocase complex via SecD. Specifically interacts with transmembrane segments of nascent integral membrane proteins during membrane integration.

The protein localises to the cell inner membrane. Its function is as follows. Required for the insertion and/or proper folding and/or complex formation of integral membrane proteins into the membrane. Involved in integration of membrane proteins that insert both dependently and independently of the Sec translocase complex, as well as at least some lipoproteins. Aids folding of multispanning membrane proteins. The sequence is that of Membrane protein insertase YidC from Burkholderia pseudomallei (strain K96243).